A 500-amino-acid polypeptide reads, in one-letter code: Chromosomal replication initiator protein DnaA (500 aa).

The domain I, interacts with DnaA modulators stretch occupies residues 1–81 (MVNASGDPVI…LQALRTVTGE (81 aa)). A domain II region spans residues 81-155 (ENMFPAFKVV…QQKMNRDPET (75 aa)). The domain III, AAA+ region stretch occupies residues 156–377 (HLNKNFTFDS…GALTRVTAVA (222 aa)). ATP is bound by residues G200, G202, K203, and T204. A domain IV, binds dsDNA region spans residues 378–500 (SLSNQPVTRA…TVRLKQSNTN (123 aa)).

It belongs to the DnaA family. Oligomerizes as a right-handed, spiral filament on DNA at oriC.

The protein resides in the cytoplasm. In terms of biological role, plays an essential role in the initiation and regulation of chromosomal replication. ATP-DnaA binds to the origin of replication (oriC) to initiate formation of the DNA replication initiation complex once per cell cycle. Binds the DnaA box (a 9 base pair repeat at the origin) and separates the double-stranded (ds)DNA. Forms a right-handed helical filament on oriC DNA; dsDNA binds to the exterior of the filament while single-stranded (ss)DNA is stabiized in the filament's interior. The ATP-DnaA-oriC complex binds and stabilizes one strand of the AT-rich DNA unwinding element (DUE), permitting loading of DNA polymerase. After initiation quickly degrades to an ADP-DnaA complex that is not apt for DNA replication. Binds acidic phospholipids. The protein is Chromosomal replication initiator protein DnaA of Bifidobacterium longum (strain DJO10A).